A 666-amino-acid chain; its full sequence is Galactocerebrosidase (666 aa).

The N-terminal stretch at 1-22 (MIYKLYFAIALCFSLCFDLCIA) is a signal peptide. T91 contributes to the substrate binding site. The N-linked (GlcNAc...) asparagine glycan is linked to N125. Substrate contacts are provided by W133 and N179. Residue E180 is the Proton donor/acceptor of the active site. The active-site Nucleophile is E256. The cysteines at positions 269 and 376 are disulfide-linked. A glycan (N-linked (GlcNAc...) asparagine) is linked at N361. Position 378 (R378) interacts with substrate. N-linked (GlcNAc...) asparagine glycosylation is found at N385, N390, N500, and N540.

The protein belongs to the glycosyl hydrolase 59 family.

The protein resides in the lysosome. The catalysed reaction is a beta-D-galactosyl-(1&lt;-&gt;1')-N-acylsphing-4-enine + H2O = an N-acylsphing-4-enine + D-galactose. It carries out the reaction beta-D-galactosyl-(1&lt;-&gt;1)-sphing-4-enine + H2O = sphing-4-enine + D-galactose. The enzyme catalyses a D-galactosylceramide + H2O = an N-acyl-sphingoid base + D-galactose. In terms of biological role, hydrolyzes the galactose ester bonds of glycolipids such as galactosylceramide and galactosylsphingosine. This chain is Galactocerebrosidase, found in Salmo salar (Atlantic salmon).